A 507-amino-acid polypeptide reads, in one-letter code: Probable cytosol aminopeptidase (507 aa).

Mn(2+) contacts are provided by lysine 254 and aspartate 259. Lysine 266 is a catalytic residue. Aspartate 277, aspartate 336, and glutamate 338 together coordinate Mn(2+). The active site involves arginine 340. Positions 486–507 are disordered; sequence PRKAQPKARSAKRSKPVSRTRA. The span at 489-507 shows a compositional bias: basic residues; it reads AQPKARSAKRSKPVSRTRA.

This sequence belongs to the peptidase M17 family. Requires Mn(2+) as cofactor.

It localises to the cytoplasm. The catalysed reaction is Release of an N-terminal amino acid, Xaa-|-Yaa-, in which Xaa is preferably Leu, but may be other amino acids including Pro although not Arg or Lys, and Yaa may be Pro. Amino acid amides and methyl esters are also readily hydrolyzed, but rates on arylamides are exceedingly low.. The enzyme catalyses Release of an N-terminal amino acid, preferentially leucine, but not glutamic or aspartic acids.. In terms of biological role, presumably involved in the processing and regular turnover of intracellular proteins. Catalyzes the removal of unsubstituted N-terminal amino acids from various peptides. This is Probable cytosol aminopeptidase from Polaromonas sp. (strain JS666 / ATCC BAA-500).